A 174-amino-acid polypeptide reads, in one-letter code: ATP synthase subunit delta, sodium ion specific (174 aa).

Belongs to the ATPase delta chain family. F-type ATPases have 2 components, F(1) - the catalytic core - and F(0) - the membrane proton channel. F(1) has five subunits: alpha(3), beta(3), gamma(1), delta(1), epsilon(1). F(0) has three main subunits: a(1), b(2) and c(10-14). The alpha and beta chains form an alternating ring which encloses part of the gamma chain. F(1) is attached to F(0) by a central stalk formed by the gamma and epsilon chains, while a peripheral stalk is formed by the delta and b chains.

Its subcellular location is the cell inner membrane. In terms of biological role, f(1)F(0) ATP synthase produces ATP from ADP in the presence of a proton or sodium gradient. F-type ATPases consist of two structural domains, F(1) containing the extramembraneous catalytic core and F(0) containing the membrane proton channel, linked together by a central stalk and a peripheral stalk. During catalysis, ATP synthesis in the catalytic domain of F(1) is coupled via a rotary mechanism of the central stalk subunits to proton translocation. Its function is as follows. This protein is part of the stalk that links CF(0) to CF(1). It either transmits conformational changes from CF(0) to CF(1) or is implicated in proton conduction. In Propionigenium modestum, this protein is ATP synthase subunit delta, sodium ion specific.